Reading from the N-terminus, the 277-residue chain is Shikimate dehydrogenase (NADP(+)) (277 aa).

Shikimate is bound by residues 17-19 (SRS) and threonine 64. The Proton acceptor role is filled by lysine 68. Positions 88 and 103 each coordinate shikimate. Residues 128–132 (GAGGS) and leucine 217 contribute to the NADP(+) site. Tyrosine 219 is a shikimate binding site. Glycine 240 contacts NADP(+).

This sequence belongs to the shikimate dehydrogenase family. Homodimer.

The catalysed reaction is shikimate + NADP(+) = 3-dehydroshikimate + NADPH + H(+). It participates in metabolic intermediate biosynthesis; chorismate biosynthesis; chorismate from D-erythrose 4-phosphate and phosphoenolpyruvate: step 4/7. Its function is as follows. Involved in the biosynthesis of the chorismate, which leads to the biosynthesis of aromatic amino acids. Catalyzes the reversible NADPH linked reduction of 3-dehydroshikimate (DHSA) to yield shikimate (SA). The sequence is that of Shikimate dehydrogenase (NADP(+)) from Afipia carboxidovorans (strain ATCC 49405 / DSM 1227 / KCTC 32145 / OM5) (Oligotropha carboxidovorans).